A 362-amino-acid chain; its full sequence is N5-carboxyaminoimidazole ribonucleotide synthase (362 aa).

Residues arginine 108, lysine 148, glycine 153–glutamine 159, glutamate 185–valine 188, glutamate 193, histidine 216, and asparagine 270–glutamate 271 contribute to the ATP site. In terms of domain architecture, ATP-grasp spans lysine 112–alanine 300.

Belongs to the PurK/PurT family. In terms of assembly, homodimer.

The enzyme catalyses 5-amino-1-(5-phospho-beta-D-ribosyl)imidazole + hydrogencarbonate + ATP = 5-carboxyamino-1-(5-phospho-D-ribosyl)imidazole + ADP + phosphate + 2 H(+). It participates in purine metabolism; IMP biosynthesis via de novo pathway; 5-amino-1-(5-phospho-D-ribosyl)imidazole-4-carboxylate from 5-amino-1-(5-phospho-D-ribosyl)imidazole (N5-CAIR route): step 1/2. Functionally, catalyzes the ATP-dependent conversion of 5-aminoimidazole ribonucleotide (AIR) and HCO(3)(-) to N5-carboxyaminoimidazole ribonucleotide (N5-CAIR). This chain is N5-carboxyaminoimidazole ribonucleotide synthase, found in Brucella melitensis biotype 1 (strain ATCC 23456 / CCUG 17765 / NCTC 10094 / 16M).